Consider the following 196-residue polypeptide: Large ribosomal subunit protein mL66 (196 aa).

Residues 1-34 (MAALNVLVSGCGRFLRGLLTGPTVTSWARPPARG) constitute a mitochondrion transit peptide.

It belongs to the bacterial ribosomal protein bS18 family. Mitochondrion-specific ribosomal protein mL66 subfamily. Component of the mitochondrial ribosome small subunit (28S) which comprises a 12S rRNA and about 30 distinct proteins.

The protein localises to the mitochondrion. The protein is Large ribosomal subunit protein mL66 (MRPS18A) of Bos taurus (Bovine).